A 217-amino-acid chain; its full sequence is Photosynthetic NDH subunit of lumenal location 4, chloroplastic (217 aa).

The transit peptide at 1–34 directs the protein to the chloroplast; the sequence is MAISTLTLTQSLYTRSFRPTIFFSSSSSSSFSCL. 2 cysteine pairs are disulfide-bonded: C87/C99 and C188/C193. The region spanning 112–211 is the PPIase FKBP-type domain; that stretch reads GVLVNIHYTA…LYDINFVEIY (100 aa).

The protein belongs to the FKBP-type PPIase family. Part of the chloroplast NDH complex, composed of a mixture of chloroplast and nucleus encoded subunits. Component of the NDH lumenal subcomplex, at least composed of PnsL1, PnsL2, PnsL3, PnsL4 and PnsL5.

The protein resides in the plastid. It localises to the chloroplast thylakoid lumen. It carries out the reaction [protein]-peptidylproline (omega=180) = [protein]-peptidylproline (omega=0). Its function is as follows. NDH shuttles electrons from NAD(P)H:plastoquinone, via FMN and iron-sulfur (Fe-S) centers, to quinones in the photosynthetic chain and possibly in a chloroplast respiratory chain. The immediate electron acceptor for the enzyme in this species is believed to be plastoquinone. Couples the redox reaction to proton translocation, and thus conserves the redox energy in a proton gradient. PPIases accelerate the folding of proteins. It catalyzes the cis-trans isomerization of proline imidic peptide bonds in oligopeptides. Seems to be essential for stabilizing the NDH subcomplex A. The protein is Photosynthetic NDH subunit of lumenal location 4, chloroplastic of Arabidopsis thaliana (Mouse-ear cress).